Reading from the N-terminus, the 201-residue chain is NAD(P)H-dependent FMN reductase ntnL (201 aa).

FMN-binding positions include Arg12, 90-93, and Tyr120; that span reads EYNG.

In terms of assembly, homodimer.

The catalysed reaction is FMNH2 + NADP(+) = FMN + NADPH + 2 H(+). It carries out the reaction FMNH2 + NAD(+) = FMN + NADH + 2 H(+). Its pathway is secondary metabolite biosynthesis; terpenoid biosynthesis. In terms of biological role, NAD(P)H-dependent FMN reductase; part of the gene cluster that mediates the biosynthesis of the meroterpenoids nectripenoids A and B, as well as cochliquninone D and isocochliquninone E. The pathway probably begins with the HR-PKS ntnH that catalyzes two chain-extension steps to form a reduced triketide, which then primes the SAT domain in the NR-PKS ntnG to initiate three more cycles of extension to give a linear hexaketide corresponding to the polyketide part of nectripenoids. The FAD-dependent monooxygenase ntnJ then performs an oxidative decarboxylation at C11 of the ntnH/ntnG product, via an electrophilic aromatic hydroxylation with concomitant ipso-decarboxylation. The membrane-bound polyprenyl transferase ntnF then introduces a farnesyl group before the FAD-dependent monooxygenase ntnK functions as the first epoxidase on terminal C12'-C13' olefin, followed by a second epoxidation on C7'-C8' catalyzed by ntnA. The terpene cyclase/mutase ntnI then initiates the sequential tricyclic ring formation through protonation of the terminal epoxide and catalyzes the regioselective and stereoselective 6/6/6-tricyclic ring formation. The cytochrome P450 monooxygenase ntnM may then hydroxylate C1'. This Nectria sp protein is NAD(P)H-dependent FMN reductase ntnL.